The following is a 964-amino-acid chain: Protein translocase subunit SecA (964 aa).

ATP contacts are provided by residues Gln-86, 104-108, and Asp-494; that span reads GEGKT. The tract at residues 848 to 964 is disordered; the sequence is AESADTIAVA…YKMCHGQNEK (117 aa). Over residues 871–882 the composition is skewed to acidic residues; that stretch reads AEGEVEEEDEDT. The segment covering 889-900 has biased composition (low complexity); it reads AESAAASGAGES. Residues Cys-947, Cys-949, Cys-958, and His-959 each contribute to the Zn(2+) site.

It belongs to the SecA family. As to quaternary structure, monomer and homodimer. Part of the essential Sec protein translocation apparatus which comprises SecA, SecYEG and auxiliary proteins SecDF. Other proteins may also be involved. Requires Zn(2+) as cofactor.

It localises to the cell membrane. The protein localises to the cytoplasm. It catalyses the reaction ATP + H2O + cellular proteinSide 1 = ADP + phosphate + cellular proteinSide 2.. Functionally, part of the Sec protein translocase complex. Interacts with the SecYEG preprotein conducting channel. Has a central role in coupling the hydrolysis of ATP to the transfer of proteins into and across the cell membrane, serving as an ATP-driven molecular motor driving the stepwise translocation of polypeptide chains across the membrane. In Bifidobacterium longum (strain NCC 2705), this protein is Protein translocase subunit SecA.